The primary structure comprises 247 residues: Phosphoribosylaminoimidazole-succinocarboxamide synthase (247 aa).

Belongs to the SAICAR synthetase family.

It carries out the reaction 5-amino-1-(5-phospho-D-ribosyl)imidazole-4-carboxylate + L-aspartate + ATP = (2S)-2-[5-amino-1-(5-phospho-beta-D-ribosyl)imidazole-4-carboxamido]succinate + ADP + phosphate + 2 H(+). It functions in the pathway purine metabolism; IMP biosynthesis via de novo pathway; 5-amino-1-(5-phospho-D-ribosyl)imidazole-4-carboxamide from 5-amino-1-(5-phospho-D-ribosyl)imidazole-4-carboxylate: step 1/2. The sequence is that of Phosphoribosylaminoimidazole-succinocarboxamide synthase from Herpetosiphon aurantiacus (strain ATCC 23779 / DSM 785 / 114-95).